Consider the following 291-residue polypeptide: UDP-N-acetylenolpyruvoylglucosamine reductase (291 aa).

Positions 19-186 (GIGGPAEWIA…VSARLKLASG (168 aa)) constitute an FAD-binding PCMH-type domain. The active site involves arginine 165. Residue serine 215 is the Proton donor of the active site. Glutamate 285 is an active-site residue.

This sequence belongs to the MurB family. FAD serves as cofactor.

The protein localises to the cytoplasm. It carries out the reaction UDP-N-acetyl-alpha-D-muramate + NADP(+) = UDP-N-acetyl-3-O-(1-carboxyvinyl)-alpha-D-glucosamine + NADPH + H(+). Its pathway is cell wall biogenesis; peptidoglycan biosynthesis. Its function is as follows. Cell wall formation. In Prochlorococcus marinus (strain NATL2A), this protein is UDP-N-acetylenolpyruvoylglucosamine reductase.